We begin with the raw amino-acid sequence, 536 residues long: Glycine--tRNA ligase (536 aa).

The segment at 56 to 67 is insert; that stretch reads LVSPAGAPSTFE. 2 residues coordinate substrate: arginine 106 and glutamate 213. ATP is bound by residues 245–247, 255–260, and 333–334; these read RNE, FRSREF, and EL. 260–264 is a substrate binding site; it reads FEQME. Positions 350–372 are insert; that stretch reads EGKLDPATNPMTVELNEHGKPKH. Substrate is bound at residue 396 to 400; sequence EPSAG. 400–403 contributes to the ATP binding site; the sequence is GADR.

This sequence belongs to the class-II aminoacyl-tRNA synthetase family. Homodimer.

Its subcellular location is the cytoplasm. The enzyme catalyses tRNA(Gly) + glycine + ATP = glycyl-tRNA(Gly) + AMP + diphosphate. Functionally, catalyzes the attachment of glycine to tRNA(Gly). In Rhodopirellula baltica (strain DSM 10527 / NCIMB 13988 / SH1), this protein is Glycine--tRNA ligase.